The sequence spans 383 residues: Chaperone protein DnaJ (383 aa).

The J domain maps to 5-70 (DYYEALGVAR…QKRAAYDQFG (66 aa)). The CR-type zinc finger occupies 139–217 (GTEVQIRVPT…CGGRGRVQSQ (79 aa)). 8 residues coordinate Zn(2+): cysteine 152, cysteine 155, cysteine 169, cysteine 172, cysteine 191, cysteine 194, cysteine 205, and cysteine 208. CXXCXGXG motif repeat units lie at residues 152 to 159 (CDACDGKG), 169 to 176 (CPTCKGHG), 191 to 198 (CPRCGGSG), and 205 to 212 (CRKCGGRG). Positions 230–249 (TGDRIRLSGEGEPGENGGPP) are disordered.

Belongs to the DnaJ family. In terms of assembly, homodimer. It depends on Zn(2+) as a cofactor.

The protein resides in the cytoplasm. Functionally, participates actively in the response to hyperosmotic and heat shock by preventing the aggregation of stress-denatured proteins and by disaggregating proteins, also in an autonomous, DnaK-independent fashion. Unfolded proteins bind initially to DnaJ; upon interaction with the DnaJ-bound protein, DnaK hydrolyzes its bound ATP, resulting in the formation of a stable complex. GrpE releases ADP from DnaK; ATP binding to DnaK triggers the release of the substrate protein, thus completing the reaction cycle. Several rounds of ATP-dependent interactions between DnaJ, DnaK and GrpE are required for fully efficient folding. Also involved, together with DnaK and GrpE, in the DNA replication of plasmids through activation of initiation proteins. The polypeptide is Chaperone protein DnaJ (Alkalilimnicola ehrlichii (strain ATCC BAA-1101 / DSM 17681 / MLHE-1)).